The chain runs to 1148 residues: Envelopment polyprotein (1148 aa).

An N-terminal signal peptide occupies residues M1 to A23. Topologically, residues A24 to M495 are lumenal. 6 cysteine pairs are disulfide-bonded: C34–C159, C68–C165, C117–C136, C141–C146, C183–C193, and C218–C257. Residue N142 is glycosylated (N-linked (GlcNAc...) asparagine; by host). The N-linked (GlcNAc...) asparagine; by host glycan is linked to N357. Cystine bridges form between C386-C445, C390-C399, C415-C434, and C462-C485. N-linked (GlcNAc...) asparagine; by host glycosylation occurs at N409. Residues L496–L516 form a helical membrane-spanning segment. The Cytoplasmic segment spans residues K517 to F637. A binding to the ribonucleoprotein region spans residues C526 to K543. 2 CCHC-type zinc fingers span residues C555–C575 and C580–C601. Binding to the ribonucleoprotein stretches follow at residues F598–L615, K602–K613, and M621–S635. Residues M621 to C644 enclose the ITAM domain. Positions Y625–L628 match the YxxL motif. The helical transmembrane segment at F638–A658 threads the bilayer. At E659–N1114 the chain is on the lumenal side. Cystine bridges form between C745-C780, C749-C787, C761-C894, C775-C905, C790-C913, C816-C825, C833-C842, and C873-C877. Residues Y767–C787 form a fusion loop region. The N-linked (GlcNAc...) asparagine; by host glycan is linked to N937. 5 disulfide bridges follow: C979-C1009, C1002-C1054, C1019-C1024, C1055-C1060, and C1094-C1098. Residues W1115–C1135 form a helical membrane-spanning segment. Binding to the ribonucleoprotein regions lie at residues L1131 to R1143 and L1131 to P1148. The Cytoplasmic portion of the chain corresponds to C1136 to P1148.

It belongs to the hantavirus envelope glycoprotein family. As to quaternary structure, homodimer. Homotetramer; forms heterotetrameric Gn-Gc spikes in the pre-fusion conformation. Interacts (via C-terminus) with the nucleoprotein. Interacts with host TUFM; this interaction contributes to the virus-induced degradation of mitochondria by autophagy, which leads to degradation of host MAVS and inhibition of type I interferon (IFN) responses. Interacts with host MAP1LC3B; this interaction contributes to the virus-induced degradation of mitochondria by autophagy, which leads to degradation of host MAVS and inhibition of type I interferon (IFN) responses. Homodimer. Homotetramer; forms heterotetrameric Gn-Gc spikes in the pre-fusion conformation. Homotrimer; forms homotrimer in the post-fusion conformation at acidic pH. Interacts (via C-terminus) with the nucleoprotein. Envelope polyprotein precursor is quickly cleaved in vivo just after synthesis, presumably by host signal peptidase.

The protein resides in the virion membrane. It is found in the host cell surface. Its subcellular location is the host Golgi apparatus membrane. The protein localises to the host endoplasmic reticulum membrane. It localises to the host mitochondrion. Forms homotetramers with glycoprotein C at the surface of the virion. Attaches the virion to host cell receptors including integrin ITGAV/ITGB3. This attachment induces virion internalization predominantly through clathrin-dependent endocytosis. Mediates the assembly and budding of infectious virus particles through its interaction with the nucleocapsid protein and the viral genome. May dysregulate normal immune and endothelial cell responses through an ITAM motif. Translocates to mitochondria, binds to host TUFM and recruits MAP1LC3B. These interactions induce mitochondrial autophagy and therefore destruction of host MAVS leading to inhibition of type I interferon (IFN) responses. Concomitant breakdown of glycoprotein N is apparently prevented by the nucleoprotein that may inhibit Gn-stimulated autophagosome-lysosome fusion. Interacts with the viral genomic RNA. Functionally, forms homotetramers with glycoprotein N at the surface of the virion. Attaches the virion to host cell receptors including integrin ITGAV/ITGB3. This attachment induces virion internalization predominantly through clathrin-dependent endocytosis. Class II fusion protein that promotes fusion of viral membrane with host endosomal membrane after endocytosis of the virion. This chain is Envelopment polyprotein (GP), found in Puumala virus (strain K27).